We begin with the raw amino-acid sequence, 177 residues long: Nucleoside triphosphate/diphosphate phosphatase (177 aa).

Catalysis depends on R24, which acts as the Proton donor. Mg(2+) is bound by residues N88, D104, D106, D108, D121, and E124.

The protein belongs to the Ntdp family. It depends on Mg(2+) as a cofactor.

It catalyses the reaction a ribonucleoside 5'-triphosphate + H2O = a ribonucleoside 5'-diphosphate + phosphate + H(+). The catalysed reaction is a ribonucleoside 5'-diphosphate + H2O = a ribonucleoside 5'-phosphate + phosphate + H(+). Functionally, has nucleoside phosphatase activity towards nucleoside triphosphates and nucleoside diphosphates. In Geobacillus sp. (strain WCH70), this protein is Nucleoside triphosphate/diphosphate phosphatase.